The following is a 97-amino-acid chain: Putative membrane protein insertion efficiency factor (97 aa).

The disordered stretch occupies residues 68-97; the sequence is VPGTELNTAPRSGQACNPTESTHSTTQTRH. A compositionally biased stretch (polar residues) spans 72–97; sequence ELNTAPRSGQACNPTESTHSTTQTRH.

It belongs to the UPF0161 family.

It is found in the cell inner membrane. Could be involved in insertion of integral membrane proteins into the membrane. The polypeptide is Putative membrane protein insertion efficiency factor (Marinobacter nauticus (strain ATCC 700491 / DSM 11845 / VT8) (Marinobacter aquaeolei)).